The following is a 433-amino-acid chain: ATP-dependent protease ATPase subunit HslU (433 aa).

ATP is bound by residues valine 18, 60–65 (GVGKTE), aspartate 246, glutamate 311, and arginine 383.

It belongs to the ClpX chaperone family. HslU subfamily. In terms of assembly, a double ring-shaped homohexamer of HslV is capped on each side by a ring-shaped HslU homohexamer. The assembly of the HslU/HslV complex is dependent on binding of ATP.

The protein resides in the cytoplasm. Its function is as follows. ATPase subunit of a proteasome-like degradation complex; this subunit has chaperone activity. The binding of ATP and its subsequent hydrolysis by HslU are essential for unfolding of protein substrates subsequently hydrolyzed by HslV. HslU recognizes the N-terminal part of its protein substrates and unfolds these before they are guided to HslV for hydrolysis. In Rhodopseudomonas palustris (strain BisB5), this protein is ATP-dependent protease ATPase subunit HslU.